Here is a 203-residue protein sequence, read N- to C-terminus: Small ribosomal subunit protein uS4 (203 aa).

Residues 93–154 (RRLDNVVFRA…KSRNMDAVTD (62 aa)) form the S4 RNA-binding domain.

The protein belongs to the universal ribosomal protein uS4 family. As to quaternary structure, part of the 30S ribosomal subunit. Contacts protein S5. The interaction surface between S4 and S5 is involved in control of translational fidelity.

One of the primary rRNA binding proteins, it binds directly to 16S rRNA where it nucleates assembly of the body of the 30S subunit. In terms of biological role, with S5 and S12 plays an important role in translational accuracy. The chain is Small ribosomal subunit protein uS4 from Chlorobium luteolum (strain DSM 273 / BCRC 81028 / 2530) (Pelodictyon luteolum).